Consider the following 542-residue polypeptide: Chaperonin GroEL 4 (542 aa).

ATP contacts are provided by residues 30–33, lysine 51, 87–91, glycine 415, and aspartate 496; these read TLGP and DGTTT.

It belongs to the chaperonin (HSP60) family. As to quaternary structure, forms a cylinder of 14 subunits composed of two heptameric rings stacked back-to-back. Interacts with the co-chaperonin GroES.

It is found in the cytoplasm. The catalysed reaction is ATP + H2O + a folded polypeptide = ADP + phosphate + an unfolded polypeptide.. Functionally, together with its co-chaperonin GroES, plays an essential role in assisting protein folding. The GroEL-GroES system forms a nano-cage that allows encapsulation of the non-native substrate proteins and provides a physical environment optimized to promote and accelerate protein folding. The sequence is that of Chaperonin GroEL 4 from Rhizobium etli (strain ATCC 51251 / DSM 11541 / JCM 21823 / NBRC 15573 / CFN 42).